Here is a 187-residue protein sequence, read N- to C-terminus: Prepronociceptin (187 aa).

Positions 1-19 (MKILFCDVLLLSLLSSVFS) are cleaved as a signal peptide. A propeptide spanning residues 20-95 (SCPRDCLTCQ…QPKASEMQHL (76 aa)) is cleaved from the precursor. Tandem repeats lie at residues 109–114 (DAEPGA), 115–120 (DAEPGA), and 121–126 (DAEPGA). Residues 109-126 (DAEPGADAEPGADAEPGA) form a 3 X 6 AA tandem repeats of D-A-E-P-G-A region. Positions 109 to 133 (DAEPGADAEPGADAEPGADDAEEVE) are disordered. The span at 112 to 131 (PGADAEPGADAEPGADDAEE) shows a compositional bias: acidic residues. The propeptide occupies 180–187 (TLHQNGNV).

It belongs to the opioid neuropeptide precursor family. Post-translationally, specific enzymatic cleavages at paired basic residues probably yield other active peptides besides nociceptin. The N-terminal domain contains 6 conserved cysteines thought to be involved in disulfide bonding and/or processing. In terms of tissue distribution, brain and spinal cord. Low levels in kidney and spleen.

Its subcellular location is the secreted. Its function is as follows. Ligand of the opioid receptor-like receptor OPRL1. It may act as a transmitter in the brain by modulating nociceptive and locomotor behavior. May be involved in neuronal differentiation and development. When administered intracerebroventricularly, nociceptin induces hyperalgesia and decreases locomotor activity. In terms of biological role, blocks nociceptin action in pain transmission by inhibiting nociceptin-induced hyperalgesia and allodynia. Has potent analgesic activity. The chain is Prepronociceptin (Pnoc) from Mus musculus (Mouse).